A 135-amino-acid polypeptide reads, in one-letter code: MIMGLENLKPAKGSVKKIKRVGRGQGSGMGKTATRGGKGQTARTGYKAKRGFEGGQQPLQRRLPKIGFRTKDSHIYSINVEKNEAIKNLEEITFSSLRALHHFPLYIEGVKLIGKDAKNLASKIKDERIKTSGQK.

The disordered stretch occupies residues 21 to 66 (VGRGQGSGMGKTATRGGKGQTARTGYKAKRGFEGGQQPLQRRLPKI).

It belongs to the universal ribosomal protein uL15 family. Part of the 50S ribosomal subunit.

Its function is as follows. Binds to the 23S rRNA. This Helicobacter pylori (strain HPAG1) protein is Large ribosomal subunit protein uL15.